The sequence spans 302 residues: MENKPQILQTKSKNTPNKGGKLSINDFEIGRPLGKGKFGSVYLARTKTGHFHCAIKVLFKSQLISGGVEHQLEREIEIQSHLQHPNIIRLYNYFWDAKKIYLILEYAPGGEMYKQLTTQKRFTEAMAGKYMYEIADALSYCHRKNVIHRDIKPENLLIGAQGELKIGDFGWSVHAPSNKRQTMCGTMDYLPPEMVNGNSHSDAVDLWAIGVLCYEFLVGKPPFEHENQADTYSAIKAGRFTYPDFVKKGARDLIGKLLVVDPRRRCSLQEVKDHYWVTSMLDSCRRAAEKQKAERAASLRDH.

Polar residues predominate over residues 1–17; the sequence is MENKPQILQTKSKNTPN. A disordered region spans residues 1–23; it reads MENKPQILQTKSKNTPNKGGKLS. In terms of domain architecture, Protein kinase spans 27–277; it reads FEIGRPLGKG…LQEVKDHYWV (251 aa). ATP contacts are provided by residues 33-41 and K56; that span reads LGKGKFGSV. Residue D150 is the Proton acceptor of the active site.

It belongs to the protein kinase superfamily. Ser/Thr protein kinase family. In terms of assembly, interacts with zen-4 and icp-1. Part of a complex containing at least air-2; icp-1; csc-1 and bir-1. Interacts with tlk-1 and bmk-1.

The protein resides in the cytoplasm. It localises to the cytoskeleton. Its subcellular location is the chromosome. It is found in the midbody. It carries out the reaction L-seryl-[protein] + ATP = O-phospho-L-seryl-[protein] + ADP + H(+). The catalysed reaction is L-threonyl-[protein] + ATP = O-phospho-L-threonyl-[protein] + ADP + H(+). Its function is as follows. Serine/threonine-protein kinase which mediates both meiotic and mitotic chromosome segregation. Required for histone H3 'Ser-10' phosphorylation. Phosphorylates tlk-1 and zen-4. The protein is Aurora/IPL1-related protein kinase 2 (air-2) of Caenorhabditis briggsae.